The sequence spans 347 residues: Gibberellin 3-beta-dioxygenase 2 (347 aa).

The Fe2OG dioxygenase domain maps to 197 to 301; the sequence is DFQGTQAVIQ…RFSMAYLWGP (105 aa). Fe cation is bound by residues histidine 225, aspartate 227, and histidine 282. Arginine 292 is an active-site residue. Arginine 292 serves as a coordination point for 2-oxoglutarate.

It belongs to the iron/ascorbate-dependent oxidoreductase family. GA3OX subfamily. Requires L-ascorbate as cofactor. The cofactor is Fe(2+). In terms of tissue distribution, highly expressed in seedlings but also expressed in roots, leaves, stems, flowers, siliques and seeds. Detected predominantly in the hypocotyl and roots of young seedlings and in the petioles and vasculature of leaves. Not expressed in the shoot apical meristem, but found in the elongation zone, the quiescent center cells and the columella cells of the root tips. Found in the cortex and the endodermis of the embryo axis in germinating seeds.

It catalyses the reaction gibberellin A20 + 2-oxoglutarate + O2 = gibberellin A1 + succinate + CO2. The protein operates within plant hormone biosynthesis; gibberellin biosynthesis. In terms of biological role, converts the inactive gibberellin (GA) precursors GA9 and GA20 in the bioactives gibberellins GA4 and GA1. Involved in the production of bioactive GA for vegetative growth and development. This chain is Gibberellin 3-beta-dioxygenase 2, found in Arabidopsis thaliana (Mouse-ear cress).